Reading from the N-terminus, the 525-residue chain is Signal recognition particle protein (525 aa).

GTP is bound by residues 107–114 (GLQGSGKT), 196–200 (DTAGR), and 254–257 (TKLD). Residues 437-525 (GMGIPGIGRK…LSKLKFPGKK (89 aa)) are disordered. A compositionally biased stretch (basic residues) spans 447–467 (SATRKSKGAKGKSGKKSKKGT). The segment covering 480–497 (GVPGMPGLAGLPGGLPDL) has biased composition (low complexity).

The protein belongs to the GTP-binding SRP family. SRP54 subfamily. As to quaternary structure, part of the signal recognition particle protein translocation system, which is composed of SRP and FtsY.

It localises to the cytoplasm. It catalyses the reaction GTP + H2O = GDP + phosphate + H(+). Functionally, involved in targeting and insertion of nascent membrane proteins into the cytoplasmic membrane. Binds to the hydrophobic signal sequence of the ribosome-nascent chain (RNC) as it emerges from the ribosomes. The SRP-RNC complex is then targeted to the cytoplasmic membrane where it interacts with the SRP receptor FtsY. The sequence is that of Signal recognition particle protein from Mycobacterium bovis (strain ATCC BAA-935 / AF2122/97).